A 255-amino-acid chain; its full sequence is tRNA (guanine-N(1)-)-methyltransferase (255 aa).

Residues Gly113 and 133-138 (IGDYVL) contribute to the S-adenosyl-L-methionine site.

Belongs to the RNA methyltransferase TrmD family. Homodimer.

The protein resides in the cytoplasm. The catalysed reaction is guanosine(37) in tRNA + S-adenosyl-L-methionine = N(1)-methylguanosine(37) in tRNA + S-adenosyl-L-homocysteine + H(+). Its function is as follows. Specifically methylates guanosine-37 in various tRNAs. This is tRNA (guanine-N(1)-)-methyltransferase from Serratia proteamaculans (strain 568).